A 453-amino-acid chain; its full sequence is Putative amino acid/polyamine transporter MPH_07630_2 (453 aa).

The next 3 helical transmembrane spans lie at 2–21 (IGFS…VLVV), 30–50 (VMIW…YSMA), and 81–101 (VCGW…NFIA). Asn-110 carries N-linked (GlcNAc...) asparagine glycosylation. The next 2 membrane-spanning stretches (helical) occupy residues 121-141 (WHAV…SIFL) and 151-171 (AILI…LATN). Asn-186 carries an N-linked (GlcNAc...) asparagine glycan. Helical transmembrane passes span 193 to 213 (AYAA…YDAP) and 231 to 251 (IVMS…SLCF). A glycan (N-linked (GlcNAc...) asparagine) is linked at Asn-274. The next 4 membrane-spanning stretches (helical) occupy residues 277-297 (GSVA…LVCA), 330-350 (LGVP…FNSI), 358-378 (FNTV…IPLL), and 403-423 (GLLA…TFNF). Asn-435 is a glycosylation site (N-linked (GlcNAc...) asparagine).

It belongs to the amino acid-polyamine-organocation (APC) superfamily.

It is found in the membrane. This is Putative amino acid/polyamine transporter MPH_07630_2 from Macrophomina phaseolina (strain MS6) (Charcoal rot fungus).